The sequence spans 1033 residues: Isoleucine--tRNA ligase 2 (1033 aa).

A 'HIGH' region motif is present at residues 47-57 (PTANGLPHVGH). Residues 590–594 (KMSKS) carry the 'KMSKS' region motif. Lys-593 is an ATP binding site.

The protein belongs to the class-I aminoacyl-tRNA synthetase family. IleS type 2 subfamily. As to quaternary structure, monomer. It depends on Zn(2+) as a cofactor.

It is found in the cytoplasm. The enzyme catalyses tRNA(Ile) + L-isoleucine + ATP = L-isoleucyl-tRNA(Ile) + AMP + diphosphate. Catalyzes the attachment of isoleucine to tRNA(Ile). As IleRS can inadvertently accommodate and process structurally similar amino acids such as valine, to avoid such errors it has two additional distinct tRNA(Ile)-dependent editing activities. One activity is designated as 'pretransfer' editing and involves the hydrolysis of activated Val-AMP. The other activity is designated 'posttransfer' editing and involves deacylation of mischarged Val-tRNA(Ile). The sequence is that of Isoleucine--tRNA ligase 2 from Bacillus anthracis.